The sequence spans 125 residues: Small ribosomal subunit protein mS41 (125 aa).

The transit peptide at 1 to 10 (MLSIFGCVRA) directs the protein to the mitochondrion. The tract at residues 103–125 (SFFGGERNRKATVAKWRAEQRNK) is disordered.

It belongs to the mitochondrion-specific ribosomal protein mS41 family.

The protein resides in the mitochondrion. Functionally, involved in telomere length regulation. This Candida glabrata (strain ATCC 2001 / BCRC 20586 / JCM 3761 / NBRC 0622 / NRRL Y-65 / CBS 138) (Yeast) protein is Small ribosomal subunit protein mS41 (FYV4).